The chain runs to 492 residues: MTIWVLSLAMKNTIYHAPLTFGLYALAGVLFALYTSRVCPFLATLSTREIATQVGAVFILAWLIRHTLLRQHIWARKQQFIQLDTALLFAMSLPLALYYNLQYQFTLDSNLKVLFGMTLFGFFTGALLQLSSKLRTLRQMPQSQNLALSSDERRSLVKQLIGLIVLLISTLTVMLSMVAIKDIHWLENNPARLLDGSGKISIVKEFAFLSLVLGGYITAILVLWSRMMKEILDHQERSLQAVTQGNLQVRLPVYSNDELGNVAMLTNQMLDSLEATQNEVKTTRDVAIVSLSALAESRDNETGAHILRTQEYVKALAEYLAAFPQYSTLLTPAYIELLYKSAPLHDVGKVGIPDSVLLKPGKLTDEEFTVMKEHPRIGAQALAIAERHLGTSSFLAIAKEIALTHHEKWDGTGYPAQLQGEAIPLSGRLMALADVYDALISARVYKPAFSHDKAKAIIVEGSGHHFDPAVVEAFLAVEEKFVAIAAHFKDAA.

6 consecutive transmembrane segments (helical) span residues 14 to 34 (IYHA…FALY), 49 to 69 (EIAT…HTLL), 80 to 100 (FIQL…LYYN), 111 to 131 (LKVL…LQLS), 160 to 180 (LIGL…MVAI), and 205 to 225 (EFAF…VLWS). The HAMP domain maps to 226–278 (RMMKEILDHQERSLQAVTQGNLQVRLPVYSNDELGNVAMLTNQMLDSLEATQN). Positions 280-490 (VKTTRDVAIV…FVAIAAHFKD (211 aa)) constitute an HD-GYP domain.

It is found in the cell inner membrane. It carries out the reaction 3',3'-c-di-GMP + 2 H2O = 2 GMP + 2 H(+). Phosphodiesterase (PDE) that catalyzes the hydrolysis of cyclic diguanylate (c-di-GMP) to GMP in vitro. Increases motility and decreases biofilm formation in vivo. The protein is Cyclic di-GMP phosphodiesterase VC_1295 of Vibrio cholerae serotype O1 (strain ATCC 39315 / El Tor Inaba N16961).